The sequence spans 132 residues: Fluoride-specific ion channel FluC 2 (132 aa).

The next 4 membrane-spanning stretches (helical) occupy residues 5-25 (VAVF…NLLG), 34-54 (TFIE…FFAA), 59-79 (PLVQ…MSAF), and 95-115 (VLYL…GIVI). Positions 71 and 74 each coordinate Na(+).

The protein belongs to the fluoride channel Fluc/FEX (TC 1.A.43) family.

The protein resides in the cell membrane. It catalyses the reaction fluoride(in) = fluoride(out). With respect to regulation, na(+) is not transported, but it plays an essential structural role and its presence is essential for fluoride channel function. Functionally, fluoride-specific ion channel. Important for reducing fluoride concentration in the cell, thus reducing its toxicity. The chain is Fluoride-specific ion channel FluC 2 from Bacillus licheniformis (strain ATCC 14580 / DSM 13 / JCM 2505 / CCUG 7422 / NBRC 12200 / NCIMB 9375 / NCTC 10341 / NRRL NRS-1264 / Gibson 46).